We begin with the raw amino-acid sequence, 630 residues long: tRNA uridine 5-carboxymethylaminomethyl modification enzyme MnmG (630 aa).

13-18 (GGGHAG) provides a ligand contact to FAD. Position 273-287 (273-287 (GPRYCPSIEDKIHRF)) interacts with NAD(+).

Belongs to the MnmG family. Homodimer. Heterotetramer of two MnmE and two MnmG subunits. FAD serves as cofactor.

It localises to the cytoplasm. Its function is as follows. NAD-binding protein involved in the addition of a carboxymethylaminomethyl (cmnm) group at the wobble position (U34) of certain tRNAs, forming tRNA-cmnm(5)s(2)U34. This chain is tRNA uridine 5-carboxymethylaminomethyl modification enzyme MnmG, found in Pseudomonas aeruginosa (strain LESB58).